Consider the following 455-residue polypeptide: Probable pectate lyase 6 (455 aa).

The first 25 residues, 1-25 (MVNLGSYVFVFVALSLTVVVPSVQA), serve as a signal peptide directing secretion. N-linked (GlcNAc...) asparagine glycosylation is found at asparagine 55 and asparagine 75. Positions 247, 271, and 275 each coordinate Ca(2+). Arginine 327 is an active-site residue.

Belongs to the polysaccharide lyase 1 family. Ca(2+) serves as cofactor.

It catalyses the reaction Eliminative cleavage of (1-&gt;4)-alpha-D-galacturonan to give oligosaccharides with 4-deoxy-alpha-D-galact-4-enuronosyl groups at their non-reducing ends.. It functions in the pathway glycan metabolism; pectin degradation; 2-dehydro-3-deoxy-D-gluconate from pectin: step 2/5. This Arabidopsis thaliana (Mouse-ear cress) protein is Probable pectate lyase 6.